Here is a 1150-residue protein sequence, read N- to C-terminus: Pesticidal crystal protein Cry9Ea (1150 aa).

The protein belongs to the delta endotoxin family.

Functionally, promotes colloidosmotic lysis by binding to the midgut epithelial cells of insects. The polypeptide is Pesticidal crystal protein Cry9Ea (cry9Ea) (Bacillus thuringiensis subsp. aizawai).